A 195-amino-acid chain; its full sequence is Imidazoleglycerol-phosphate dehydratase (195 aa).

Belongs to the imidazoleglycerol-phosphate dehydratase family.

The protein localises to the cytoplasm. The enzyme catalyses D-erythro-1-(imidazol-4-yl)glycerol 3-phosphate = 3-(imidazol-4-yl)-2-oxopropyl phosphate + H2O. Its pathway is amino-acid biosynthesis; L-histidine biosynthesis; L-histidine from 5-phospho-alpha-D-ribose 1-diphosphate: step 6/9. This chain is Imidazoleglycerol-phosphate dehydratase, found in Burkholderia mallei (strain NCTC 10247).